A 303-amino-acid polypeptide reads, in one-letter code: GTPase Era (303 aa).

Residues 8 to 176 (YCGFIAIVGR…ASIVRKHMPE (169 aa)) form the Era-type G domain. The segment at 16–23 (GRPNVGKS) is G1. 16 to 23 (GRPNVGKS) contacts GTP. Residues 42 to 46 (QTTRH) are G2. Residues 63–66 (DTPG) are G3. Residues 63–67 (DTPGL) and 125–128 (NKVD) contribute to the GTP site. The interval 125–128 (NKVD) is G4. The G5 stretch occupies residues 155-157 (ISA). One can recognise a KH type-2 domain in the interval 207 to 284 (LGEELPYSVT…HLELWVKVKS (78 aa)).

This sequence belongs to the TRAFAC class TrmE-Era-EngA-EngB-Septin-like GTPase superfamily. Era GTPase family. Monomer.

It localises to the cytoplasm. The protein resides in the cell inner membrane. Functionally, an essential GTPase that binds both GDP and GTP, with rapid nucleotide exchange. Plays a role in 16S rRNA processing and 30S ribosomal subunit biogenesis and possibly also in cell cycle regulation and energy metabolism. The protein is GTPase Era of Yersinia enterocolitica serotype O:8 / biotype 1B (strain NCTC 13174 / 8081).